The chain runs to 151 residues: Large ribosomal subunit protein uL13 (151 aa).

The protein belongs to the universal ribosomal protein uL13 family. As to quaternary structure, part of the 50S ribosomal subunit.

Functionally, this protein is one of the early assembly proteins of the 50S ribosomal subunit, although it is not seen to bind rRNA by itself. It is important during the early stages of 50S assembly. This is Large ribosomal subunit protein uL13 from Synechococcus sp. (strain JA-3-3Ab) (Cyanobacteria bacterium Yellowstone A-Prime).